We begin with the raw amino-acid sequence, 299 residues long: S-formylglutathione hydrolase (299 aa).

Cu cation contacts are provided by M1 and H140. Active-site charge relay system residues include S161, D241, and H276.

It belongs to the esterase D family. As to quaternary structure, monomer.

The protein localises to the cytoplasm. The enzyme catalyses S-formylglutathione + H2O = formate + glutathione + H(+). In terms of biological role, serine hydrolase involved in the detoxification of formaldehyde. The chain is S-formylglutathione hydrolase from Saccharomyces cerevisiae (strain ATCC 204508 / S288c) (Baker's yeast).